Reading from the N-terminus, the 123-residue chain is Dormancy-associated protein homolog 4 (123 aa).

Positions 7-86 (LWDETVAGPT…NPGTPLTPGT (80 aa)) are disordered. Low complexity predominate over residues 30-46 (LSTVRSSPPSLSSDQVT). 2 stretches are compositionally biased toward polar residues: residues 47-58 (RSIMVTKGNNNV) and 71-80 (PTCSSSNPGT). A Phosphoserine modification is found at serine 74.

It belongs to the DRM1/ARP family.

In Arabidopsis thaliana (Mouse-ear cress), this protein is Dormancy-associated protein homolog 4.